A 247-amino-acid chain; its full sequence is E3 SUMO-protein ligase NSE2 (247 aa).

Met1 is modified (N-acetylmethionine). Residues Lys90 and Lys107 each participate in a glycyl lysine isopeptide (Lys-Gly) (interchain with G-Cter in SUMO2) cross-link. Ser116 is modified (phosphoserine). Residues Lys125 and Lys130 each participate in a glycyl lysine isopeptide (Lys-Gly) (interchain with G-Cter in SUMO2) cross-link. The SP-RING-type zinc finger occupies 154–240 (VDEDIIVTQS…LRRAIENHNK (87 aa)). Zn(2+) is bound by residues Cys185, His187, Cys210, and Cys215.

The protein belongs to the NSE2 family. As to quaternary structure, component of the SMC5-SMC6 complex which consists at least of SMC5, SMC6, NSMCE2, NSMCE1, NSMCE4A or EID3 and NSMCE3. In terms of processing, sumoylated, possibly via autosumoylation.

The protein localises to the nucleus. It localises to the chromosome. The protein resides in the telomere. Its subcellular location is the PML body. The protein operates within protein modification; protein sumoylation. Functionally, E3 SUMO-protein ligase component of the SMC5-SMC6 complex, a complex involved in DNA double-strand break repair by homologous recombination. Is not be required for the stability of the complex. The complex may promote sister chromatid homologous recombination by recruiting the SMC1-SMC3 cohesin complex to double-strand breaks. The complex is required for telomere maintenance via recombination in ALT (alternative lengthening of telomeres) cell lines and mediates sumoylation of shelterin complex (telosome) components which is proposed to lead to shelterin complex disassembly in ALT-associated PML bodies (APBs). Acts as an E3 ligase mediating SUMO attachment to various proteins such as SMC6L1 and TSNAX, the shelterin complex subunits TERF1, TERF2, TINF2 and TERF2IP, RAD51AP1, and maybe the cohesin components RAD21 and STAG2. Required for recruitment of telomeres to PML nuclear bodies. SUMO protein-ligase activity is required for the prevention of DNA damage-induced apoptosis by facilitating DNA repair, and for formation of APBs in ALT cell lines. Required for sister chromatid cohesion during prometaphase and mitotic progression. The sequence is that of E3 SUMO-protein ligase NSE2 (NSMCE2) from Homo sapiens (Human).